Here is a 554-residue protein sequence, read N- to C-terminus: Potassium-transporting ATPase potassium-binding subunit (554 aa).

Helical transmembrane passes span Pro-3–Val-23, Pro-60–Leu-80, Gly-131–Val-151, Val-174–Ile-194, Leu-252–Met-272, Gly-279–Trp-299, Phe-323–Val-343, Gly-352–Val-372, Gly-375–Gly-395, Phe-412–Met-432, Leu-481–Gly-501, and Leu-522–Ala-542.

The protein belongs to the KdpA family. In terms of assembly, the system is composed of three essential subunits: KdpA, KdpB and KdpC.

It localises to the cell membrane. In terms of biological role, part of the high-affinity ATP-driven potassium transport (or Kdp) system, which catalyzes the hydrolysis of ATP coupled with the electrogenic transport of potassium into the cytoplasm. This subunit binds the extracellular potassium ions and delivers the ions to the membrane domain of KdpB through an intramembrane tunnel. The sequence is that of Potassium-transporting ATPase potassium-binding subunit from Streptomyces coelicolor (strain ATCC BAA-471 / A3(2) / M145).